Consider the following 38-residue polypeptide: Photosystem II reaction center protein L (38 aa).

A helical membrane pass occupies residues 17–37; the sequence is SLYWGLLLIFVLAVLFSNYFF.

Belongs to the PsbL family. PSII is composed of 1 copy each of membrane proteins PsbA, PsbB, PsbC, PsbD, PsbE, PsbF, PsbH, PsbI, PsbJ, PsbK, PsbL, PsbM, PsbT, PsbX, PsbY, PsbZ, Psb30/Ycf12, at least 3 peripheral proteins of the oxygen-evolving complex and a large number of cofactors. It forms dimeric complexes.

Its subcellular location is the plastid. The protein localises to the chloroplast thylakoid membrane. In terms of biological role, one of the components of the core complex of photosystem II (PSII). PSII is a light-driven water:plastoquinone oxidoreductase that uses light energy to abstract electrons from H(2)O, generating O(2) and a proton gradient subsequently used for ATP formation. It consists of a core antenna complex that captures photons, and an electron transfer chain that converts photonic excitation into a charge separation. This subunit is found at the monomer-monomer interface and is required for correct PSII assembly and/or dimerization. This Gnetum gnemon (Spanish joint-fir) protein is Photosystem II reaction center protein L.